A 202-amino-acid chain; its full sequence is Diadenylate cyclase (202 aa).

The helical transmembrane segment at 6-26 (VFSVIILVLLFLILALTLLFV) threads the bilayer. One can recognise a DAC domain in the interval 29-185 (NKRTRSFVIR…RGVIKTLSSN (157 aa)).

The protein belongs to the adenylate cyclase family. DacB/CdaS subfamily. As to quaternary structure, probably oligomerizes.

It localises to the cell membrane. The catalysed reaction is 2 ATP = 3',3'-c-di-AMP + 2 diphosphate. Its function is as follows. Catalyzes the condensation of 2 ATP molecules into cyclic di-AMP (c-di-AMP), a second messenger used to regulate differing processes in different bacteria. The protein is Diadenylate cyclase of Mycoplasma pneumoniae (strain ATCC 29342 / M129 / Subtype 1) (Mycoplasmoides pneumoniae).